We begin with the raw amino-acid sequence, 1368 residues long: DNA-directed RNA polymerase subunit beta (1368 aa).

This sequence belongs to the RNA polymerase beta chain family. The RNAP catalytic core consists of 2 alpha, 1 beta, 1 beta' and 1 omega subunit. When a sigma factor is associated with the core the holoenzyme is formed, which can initiate transcription.

The catalysed reaction is RNA(n) + a ribonucleoside 5'-triphosphate = RNA(n+1) + diphosphate. Functionally, DNA-dependent RNA polymerase catalyzes the transcription of DNA into RNA using the four ribonucleoside triphosphates as substrates. The protein is DNA-directed RNA polymerase subunit beta of Burkholderia lata (strain ATCC 17760 / DSM 23089 / LMG 22485 / NCIMB 9086 / R18194 / 383).